We begin with the raw amino-acid sequence, 426 residues long: Kynureninase (426 aa).

Pyridoxal 5'-phosphate contacts are provided by residues L110, S111, 138–141 (FPSD), D223, H226, and Y248. An N6-(pyridoxal phosphate)lysine modification is found at K249. Pyridoxal 5'-phosphate is bound by residues W279 and N307.

This sequence belongs to the kynureninase family. Homodimer. Pyridoxal 5'-phosphate is required as a cofactor.

It catalyses the reaction L-kynurenine + H2O = anthranilate + L-alanine + H(+). The catalysed reaction is 3-hydroxy-L-kynurenine + H2O = 3-hydroxyanthranilate + L-alanine + H(+). The protein operates within amino-acid degradation; L-kynurenine degradation; L-alanine and anthranilate from L-kynurenine: step 1/1. It participates in cofactor biosynthesis; NAD(+) biosynthesis; quinolinate from L-kynurenine: step 2/3. Functionally, catalyzes the cleavage of L-kynurenine (L-Kyn) and L-3-hydroxykynurenine (L-3OHKyn) into anthranilic acid (AA) and 3-hydroxyanthranilic acid (3-OHAA), respectively. This Myxococcus xanthus (strain DK1622) protein is Kynureninase.